The sequence spans 248 residues: Inner membrane protein pE248R (248 aa).

The N-myristoyl glycine; by host moiety is linked to residue Gly2. The Cytoplasmic portion of the chain corresponds to 2–199; sequence GGSTSKNSFK…ADAISAVFKN (198 aa). Residues 200-220 traverse the membrane as a helical segment; sequence IMVAAVVIVLIIVGFIAVFYF. Over 221–248 the chain is Extracellular; sequence LHSRHRHEEEEEAEPLISNKVLKNAAVS.

This sequence belongs to the asfivirus E248R family. Interacts with A151R.

The protein resides in the host membrane. The protein localises to the virion membrane. In terms of biological role, essential for viral fusion with host endosomal membrane and core release. The sequence is that of Inner membrane protein pE248R from African swine fever virus (strain Badajoz 1971 Vero-adapted) (Ba71V).